Consider the following 248-residue polypeptide: Endonuclease V (248 aa).

Mg(2+) is bound by residues D54 and D118.

Belongs to the endonuclease V family. Requires Mg(2+) as cofactor.

Its subcellular location is the cytoplasm. The catalysed reaction is Endonucleolytic cleavage at apurinic or apyrimidinic sites to products with a 5'-phosphate.. In terms of biological role, DNA repair enzyme involved in the repair of deaminated bases. Selectively cleaves double-stranded DNA at the second phosphodiester bond 3' to a deoxyinosine leaving behind the intact lesion on the nicked DNA. The polypeptide is Endonuclease V (Natronomonas pharaonis (strain ATCC 35678 / DSM 2160 / CIP 103997 / JCM 8858 / NBRC 14720 / NCIMB 2260 / Gabara) (Halobacterium pharaonis)).